The sequence spans 293 residues: Ribosomal protein L11 methyltransferase (293 aa).

Residues Thr-145, Gly-166, Asp-188, and Asn-230 each contribute to the S-adenosyl-L-methionine site.

It belongs to the methyltransferase superfamily. PrmA family.

The protein localises to the cytoplasm. It carries out the reaction L-lysyl-[protein] + 3 S-adenosyl-L-methionine = N(6),N(6),N(6)-trimethyl-L-lysyl-[protein] + 3 S-adenosyl-L-homocysteine + 3 H(+). Methylates ribosomal protein L11. This Salmonella newport (strain SL254) protein is Ribosomal protein L11 methyltransferase.